The chain runs to 404 residues: Glucose-1-phosphate adenylyltransferase 2 (404 aa).

Alpha-D-glucose 1-phosphate-binding positions include Tyr97, Gly162, 177–178 (EK), and Ser195.

This sequence belongs to the bacterial/plant glucose-1-phosphate adenylyltransferase family. Homotetramer.

The catalysed reaction is alpha-D-glucose 1-phosphate + ATP + H(+) = ADP-alpha-D-glucose + diphosphate. It participates in glycan biosynthesis; glycogen biosynthesis. Its function is as follows. Involved in the biosynthesis of ADP-glucose, a building block required for the elongation reactions to produce glycogen. Catalyzes the reaction between ATP and alpha-D-glucose 1-phosphate (G1P) to produce pyrophosphate and ADP-Glc. The sequence is that of Glucose-1-phosphate adenylyltransferase 2 from Vibrio parahaemolyticus serotype O3:K6 (strain RIMD 2210633).